The sequence spans 473 residues: MKILYSLRRFYHVETLFNGTFVLAGRDQETTGFAWWAGNARLINLSGKLLGAHVAHAGLIVFWAGAMNLFEVAHFVPEKPMYEQGLILLPHLATLGWGVGPGGEVLDTFPYFVSGVLHLISSAVLGFGGIYHALLGPETLEESFPFFGYVWKDRNKMTTILGIHLILLGLGAFLLVLKALYFGGVYDTWAPGGGDVRKITNLTLSPGVIFGYLLKSPFGGEGWIVSVDDLEDIIGGHVWLGFICVFGGIWHILTKPFAWARRAFVWSGEAYLSYSLAALSVFGFIACCFVWFNNTAYPSEFYGPTGPEASQAQAFTFLVRDQRLGANVGSAQGPTGLGKYLMRSPTGEVIFGGETMRFWDLRAPWLEPLRGPNGLDLSRLKKDIQPWQERRSAEYMTHAPLGSLNSVGGVATEINAVNYVSPRSWLSTSHFVLGFFFFVGHLWHAGRARAAAAGFEKGIDRDLEPVLYMNPLN.

The propeptide occupies 1-14; the sequence is MKILYSLRRFYHVE. The residue at position 15 (threonine 15) is an N-acetylthreonine. Position 15 is a phosphothreonine (threonine 15). A run of 5 helical transmembrane segments spans residues 69 to 93, 134 to 155, 178 to 200, 255 to 275, and 291 to 312; these read LFEV…PHLA, LLGP…KDRN, KALY…RKIT, KPFA…LSYS, and WFNN…ASQA. Glutamate 367 serves as a coordination point for [CaMn4O5] cluster. The chain crosses the membrane as a helical span at residues 447–471; the sequence is RARAAAAGFEKGIDRDLEPVLYMNP.

The protein belongs to the PsbB/PsbC family. PsbC subfamily. In terms of assembly, PSII is composed of 1 copy each of membrane proteins PsbA, PsbB, PsbC, PsbD, PsbE, PsbF, PsbH, PsbI, PsbJ, PsbK, PsbL, PsbM, PsbT, PsbX, PsbY, PsbZ, Psb30/Ycf12, at least 3 peripheral proteins of the oxygen-evolving complex and a large number of cofactors. It forms dimeric complexes. The cofactor is Binds multiple chlorophylls and provides some of the ligands for the Ca-4Mn-5O cluster of the oxygen-evolving complex. It may also provide a ligand for a Cl- that is required for oxygen evolution. PSII binds additional chlorophylls, carotenoids and specific lipids..

The protein resides in the plastid. Its subcellular location is the chloroplast thylakoid membrane. One of the components of the core complex of photosystem II (PSII). It binds chlorophyll and helps catalyze the primary light-induced photochemical processes of PSII. PSII is a light-driven water:plastoquinone oxidoreductase, using light energy to abstract electrons from H(2)O, generating O(2) and a proton gradient subsequently used for ATP formation. The sequence is that of Photosystem II CP43 reaction center protein from Brachypodium distachyon (Purple false brome).